The chain runs to 157 residues: Protein Smg (157 aa).

Belongs to the Smg family.

The polypeptide is Protein Smg (Yersinia pestis (strain Pestoides F)).